A 141-amino-acid polypeptide reads, in one-letter code: HTH-type transcriptional repressor NsrR (141 aa).

The HTH rrf2-type domain occupies 2-129 (QLTSFTDYGL…DNYTLADMVQ (128 aa)). The H-T-H motif DNA-binding region spans 28–51 (ISQVTEVYGVSRNHMVKIINQLSR). Residues cysteine 91, cysteine 96, and cysteine 102 each contribute to the [2Fe-2S] cluster site.

[2Fe-2S] cluster is required as a cofactor.

Its function is as follows. Nitric oxide-sensitive repressor of genes involved in protecting the cell against nitrosative stress. May require iron for activity. The sequence is that of HTH-type transcriptional repressor NsrR from Yersinia enterocolitica serotype O:8 / biotype 1B (strain NCTC 13174 / 8081).